Here is a 222-residue protein sequence, read N- to C-terminus: Eukaryotic translation initiation factor 4E-1 (222 aa).

Residues 1–22 are compositionally biased toward basic and acidic residues; sequence MVDEVEKPASLEESKTNTREVE. Residues 1–37 form a disordered region; that stretch reads MVDEVEKPASLEESKTNTREVEEGAEEVIESDDTMSS. Over residues 23 to 33 the composition is skewed to acidic residues; sequence EGAEEVIESDD. 2 EIF4G-binding regions span residues 47-50 and 57-93; these read HPLE and FDNP…NNIH. Residues 65 to 70, K97, and 115 to 116 each bind mRNA; these read KQAAWG and WE. A disulfide bridge connects residues C120 and C158. Residues 141–150 form an EIF4G-binding region; that stretch reads YTLLAMIGEQ. MRNA-binding positions include 165–170 and 210–214; these read RVRQEK and KKLDR.

It belongs to the eukaryotic initiation factor 4E family. In terms of assembly, EIF4F is a multi-subunit complex, the composition of which varies with external and internal environmental conditions. It is composed of at least EIF4A, EIF4E and EIF4G. EIF4E is also known to interact with other partners. In higher plants two isoforms of EIF4F have been identified, named isoform EIF4F and isoform EIF(iso)4F. Isoform EIF4F has subunits p220 and p26, whereas isoform EIF(iso)4F has subunits p82 and p28. Post-translationally, according to the redox status, the Cys-120-Cys-158 disulfide bridge may have a role in regulating protein function by affecting its ability to bind capped mRNA. As to expression, expressed ubiquitously in seedlings, roots, leaves, sepals, petals, anthers and dehisced pollen, with highest levels in pollen, maturing anthers and roots. Strongly expressed in susceptible plants but not in resistant ones.

It is found in the nucleus. It localises to the cytoplasm. Its function is as follows. Component of the protein complex eIF4F, which is involved in the recognition of the mRNA cap, ATP-dependent unwinding of 5'-terminal secondary structure and recruitment of mRNA to the ribosome. Recognizes and binds the 7-methylguanosine-containing mRNA cap during an early step in the initiation of protein synthesis and facilitates ribosome binding by inducing the unwinding of the mRNAs secondary structures. Key component of recessive resistance to potyviruses. (Microbial infection) Susceptibility host factor required for viral infection (e.g. potato virus Y (PVY) and pepper mottle virus (PepMoV)) by recruiting viral RNAs to the host ribosomal complex via an interaction with viral genome-linked protein (VPg). In Nicotiana tabacum (Common tobacco), this protein is Eukaryotic translation initiation factor 4E-1.